A 391-amino-acid polypeptide reads, in one-letter code: Cyclin-A1 (391 aa).

The protein belongs to the cyclin family. Cyclin AB subfamily. In terms of assembly, interacts with the CDK1 and the CDK2 protein kinases to form a serine/threonine kinase holoenzyme complex. The cyclin subunit imparts substrate specificity to the complex.

It localises to the nucleus. In terms of biological role, may be involved in the control of the cell cycle at the G1/S (start) and G2/M (mitosis) transitions. The chain is Cyclin-A1 (ccna1) from Carassius auratus (Goldfish).